The primary structure comprises 74 residues: MCVCIETLKSLNSNNQGLSSNEQAFGSPSNMNESMVFGSPSSSVLSSSFKGSNSTCATNKSASSAMFSRPFYYE.

This is an uncharacterized protein from Dictyostelium discoideum (Social amoeba).